A 513-amino-acid polypeptide reads, in one-letter code: MMNKDMLLHQHQQPQQDENMSNLTSASGDQASVSSGNITEASGSNYFPHHQQQQEQQQQQLVVPDSQTQKKRRNQPGNPDPESEVIALSPKTLMATNRFVCEICNKGFQRDQNLQLHRRGHNLPWKLKQRSNKEVIRKKVYVCPEASCVHHDPSRALGDLTGIKKHFCRKHGEKKWKCDKCSKKYAVQSDCKAHSKTCGTKEYRCDCGTLFSRRDSFITHRAFCEALAEETAREVVIPQNQNNNQPNPLLIHQSASHPHHHHQTQPTINVSSSSSSSHNHNIINSLHFDTNNGNTNNSNNSNNHLHTFPMKKEQQSNDHIMNYHHSIIPPWLAPQPHALTSSNPNPSNGGGGGGSLFSLASPAMSATALLQKAAQMGSTKTPPLPPTTAYERSTHNNNLTTTMAAMMTSPSGFISSNNNNHVLFQDYNASGFDNHGREEAFDDTFGGFLRTNEVTAAAGSEKSTKSGGGEGLTRDFLGLRPLMSHNEILSFAGLGSCINSSASDQLHPKPWQG.

The segment at 1 to 84 (MMNKDMLLHQ…QPGNPDPESE (84 aa)) is disordered. Over residues 10–45 (QHQQPQQDENMSNLTSASGDQASVSSGNITEASGSN) the composition is skewed to polar residues. A compositionally biased stretch (low complexity) spans 51–60 (QQQQEQQQQQ). Ser89 bears the Phosphoserine mark. 2 C2H2-type zinc fingers span residues 99–121 (FVCE…RRGH) and 141–171 (YVCP…CRKH). Residues 163–170 (IKKHFCRK) carry the Nuclear localization signal motif. The C2H2-type 2; degenerate zinc finger occupies 176 to 199 (WKCDKCSKKYAVQSDCKAHSKTCG). Zn(2+)-binding residues include Cys178, Cys181, His194, Cys198, Cys205, Cys207, His220, and Cys224. The segment at 203–226 (YRCDCGTLFSRRDSFITHRAFCEA) adopts a CCHC-type 2; atypical zinc-finger fold. An SHR-binding region spans residues 213–225 (RRDSFITHRAFCE). 2 disordered regions span residues 255–280 (ASHP…SHNH) and 334–358 (PQPH…SLFS). Residues 264 to 280 (TQPTINVSSSSSSSHNH) show a composition bias toward low complexity.

Its subcellular location is the nucleus. Functionally, probable transcription factor. In Arabidopsis thaliana (Mouse-ear cress), this protein is Protein indeterminate-domain 11.